Here is a 456-residue protein sequence, read N- to C-terminus: Chordin-like protein 1 (456 aa).

The N-terminal stretch at 1-28 (MRRKWRSEDFHFVFFGVLCLLLIDRGKL) is a signal peptide. VWFC domains lie at 36 to 101 (TYCV…PRCP), 115 to 181 (KSCE…PVCR), and 262 to 327 (RVCV…KVCP). The N-linked (GlcNAc...) asparagine glycan is linked to N120. The short motif at 181 to 183 (RGD) is the Cell attachment site element. N-linked (GlcNAc...) asparagine glycosylation is present at N295.

As to expression, mainly expressed in the ventral retina.

The protein resides in the secreted. Functionally, seems to antagonize the function of BMP4 by binding to it and preventing its interaction with receptors. In Gallus gallus (Chicken), this protein is Chordin-like protein 1 (CHRDL1).